The primary structure comprises 144 residues: Transcription antitermination protein NusB (144 aa).

The protein belongs to the NusB family.

Its function is as follows. Involved in transcription antitermination. Required for transcription of ribosomal RNA (rRNA) genes. Binds specifically to the boxA antiterminator sequence of the ribosomal RNA (rrn) operons. This Leifsonia xyli subsp. xyli (strain CTCB07) protein is Transcription antitermination protein NusB.